A 102-amino-acid polypeptide reads, in one-letter code: uncharacterized protein (102 aa).

The N-terminal stretch at 1–19 is a signal peptide; sequence MFLFCFVLFCSLVFPLARG.

This is an uncharacterized protein from Saccharomyces cerevisiae (strain ATCC 204508 / S288c) (Baker's yeast).